We begin with the raw amino-acid sequence, 384 residues long: MAYRKSNLYLNLVNSYVIDSPQPSSINYWWNLGSLLGLCLVIQITTGIFLAMHYSSNIELAFSSVEHIMRDVQTGWLIRYMHTNGASFFFICMYIHIGKGLYYGSYKSPRVIVWTVGVIIFILTMAAAFLGYCLVYGQMSHWGATVITNLFSAIPFIGNDIVTWLWGSFSVSNPTIMRFFTFHYLVPFIIAAMVIMHLMTLHVHGSSNPLGITGNLDRLPMHGYFIFKDLVTVFVFMIFFSLFVFFSPNTLGHPDNYIPGNPLVTPASIVPEWYLLPFYTILRSIPDKLGGVITMFGTILVLLMLPITDRSIIRGNTFKTLSKFFFFLFITNFILLGKLGECHVEVPFILMGQICTFIYFAYFLILVPIISMIENILFYLTNKK.

4 helical membrane passes run 32 to 52, 76 to 98, 113 to 133, and 179 to 199; these read LGSL…FLAM, WLIR…IHIG, VWTV…LGYC, and FFTF…MHLM. Heme b contacts are provided by His82 and His96. His183 and His197 together coordinate heme b. Residue His202 participates in a ubiquinone binding. A run of 4 helical transmembrane segments spans residues 225–245, 289–309, 321–341, and 348–368; these read FIFK…LFVF, LGGV…PITD, LSKF…KLGE, and FILM…ILVP.

Belongs to the cytochrome b family. In terms of assembly, fungal cytochrome b-c1 complex contains 10 subunits; 3 respiratory subunits, 2 core proteins and 5 low-molecular weight proteins. Cytochrome b-c1 complex is a homodimer. Requires heme b as cofactor.

Its subcellular location is the mitochondrion inner membrane. Its function is as follows. Component of the ubiquinol-cytochrome c reductase complex (complex III or cytochrome b-c1 complex) that is part of the mitochondrial respiratory chain. The b-c1 complex mediates electron transfer from ubiquinol to cytochrome c. Contributes to the generation of a proton gradient across the mitochondrial membrane that is then used for ATP synthesis. This Eremothecium gossypii (strain ATCC 10895 / CBS 109.51 / FGSC 9923 / NRRL Y-1056) (Yeast) protein is Cytochrome b (COB).